We begin with the raw amino-acid sequence, 64 residues long: Large ribosomal subunit protein bL35 (64 aa).

Basic residues predominate over residues 38-53; that stretch reads KRKANLNAPKHVHHTN. A disordered region spans residues 38 to 64; that stretch reads KRKANLNAPKHVHHTNAHSVMSLLCRA.

The protein belongs to the bacterial ribosomal protein bL35 family.

In Helicobacter pylori (strain G27), this protein is Large ribosomal subunit protein bL35.